The chain runs to 251 residues: WUSCHEL-related homeobox 4 (251 aa).

Disordered stretches follow at residues 1–21 (MKVHEFSNGFSSSWDQHDSTS) and 33–93 (LAPK…RWNP). The span at 11–21 (SSSWDQHDSTS) shows a compositional bias: low complexity. Basic and acidic residues predominate over residues 71-83 (KFEHKRDPPHQLE). A DNA-binding region (homeobox; WUS-type) is located at residues 86–150 (PGGTRWNPTQ…NHKARERQKQ (65 aa)).

Belongs to the WUS homeobox family. In terms of tissue distribution, expressed in the vasculature of the whole plant (roots, hypocotyls, cotyledons and leaves), trichomes and stomata. Expresse in the developing vascular bundles of root and shoot lateral organs.

It localises to the nucleus. Its function is as follows. Promotes differentiation and/or maintenance of the vascular procambium, the initial cells of the developing vasculature. Part of the TDIF-TDR-WOX4 signaling pathway that plays a crucial role in the maintenance of the vascular meristem organization during secondary growth. Is required for promoting the proliferation of procambial/cambial stem cells but not for repressing their commitment to xylem differentiation in response to the TDIF signal. Acts redundantly with WOX14 downstream of the TDR/PXY receptor kinase to regulate procambial cell proliferation and differentiation in vascular tissue, independently of any role in vascular. Acts as a cambium regulator in the inflorescence stem. Is required for auxin-dependent cambium stimulation in the inflorescence stem. This chain is WUSCHEL-related homeobox 4 (WOX4), found in Arabidopsis thaliana (Mouse-ear cress).